The following is a 247-amino-acid chain: E3 ubiquitin-protein ligase RNF182 (247 aa).

The segment at cysteine 20 to arginine 68 adopts an RING-type zinc-finger fold. Helical transmembrane passes span valine 184–leucine 204 and leucine 211–phenylalanine 231.

As to quaternary structure, interacts with ATP6V0C. As to expression, up-regulated in neuronal cells subjected to cell death-inducing injuries, such as oxygen and glucose deprivation (at protein level). Could be up-regulated in Alzheimer disease brains. Highly expressed in innate immune organs such as lymph nodes and spleen and in immune cells such as macrophages and dendritic cells.

The protein localises to the membrane. The protein resides in the cytoplasm. It catalyses the reaction S-ubiquitinyl-[E2 ubiquitin-conjugating enzyme]-L-cysteine + [acceptor protein]-L-lysine = [E2 ubiquitin-conjugating enzyme]-L-cysteine + N(6)-ubiquitinyl-[acceptor protein]-L-lysine.. The protein operates within protein modification; protein ubiquitination. E3 ubiquitin-protein ligase that mediates the ubiquitination of ATP6V0C and targets it to degradation via the ubiquitin-proteasome pathway. Also plays a role in the inhibition of TLR-triggered innate immune response by mediating 'Lys'-48-linked ubiquitination and subsequent degradation of NF-kappa-B component RELA. This Homo sapiens (Human) protein is E3 ubiquitin-protein ligase RNF182 (RNF182).